A 334-amino-acid polypeptide reads, in one-letter code: Dihydroorotate dehydrogenase (quinone) (334 aa).

Residues 59 to 63 and T83 each bind FMN; that span reads AGLDK. K63 contributes to the substrate binding site. Residue 108–112 coordinates substrate; it reads NRMGF. Residues N136 and N169 each coordinate FMN. N169 serves as a coordination point for substrate. The Nucleophile role is filled by S172. N174 lines the substrate pocket. The FMN site is built by K214 and T242. 243–244 is a substrate binding site; sequence NT. FMN is bound by residues G265, G294, and 315–316; that span reads YS.

It belongs to the dihydroorotate dehydrogenase family. Type 2 subfamily. Monomer. FMN is required as a cofactor.

The protein resides in the cell membrane. It carries out the reaction (S)-dihydroorotate + a quinone = orotate + a quinol. It participates in pyrimidine metabolism; UMP biosynthesis via de novo pathway; orotate from (S)-dihydroorotate (quinone route): step 1/1. Functionally, catalyzes the conversion of dihydroorotate to orotate with quinone as electron acceptor. The sequence is that of Dihydroorotate dehydrogenase (quinone) from Acinetobacter baumannii (strain SDF).